The following is a 1233-amino-acid chain: Integrator complex subunit 4 homolog (1233 aa).

2 HEAT repeats span residues 236 to 273 (SLIN…NLDK) and 275 to 310 (SEEI…RGAS). The interval 426–473 (RLQQKQQQQQQQQQQQQQQPPQQQPSQQPNQQPNQQQTNVSGTHIATP) is disordered. The segment covering 428 to 462 (QQKQQQQQQQQQQQQQQPPQQQPSQQPNQQPNQQQ) has biased composition (low complexity). 3 HEAT repeats span residues 487–524 (ILES…RNDE), 525–561 (FAQK…NVVI), and 563–597 (EEQL…SNYS). Residues 767 to 792 (NNNTNNNNNNNNNNNNNNNNNNNNNN) show a composition bias toward low complexity. Disordered stretches follow at residues 767-796 (NNNT…DEND) and 993-1057 (DKKL…TTTT). A compositionally biased stretch (acidic residues) spans 1000 to 1013 (EENEENEENENNEN). The span at 1014-1030 (ENEKENGKNKEKEKNEN) shows a compositional bias: basic and acidic residues. A compositionally biased stretch (low complexity) spans 1046–1057 (KTTSELIKTTTT).

Belongs to the Integrator subunit 4 family. As to quaternary structure, component of the Integrator complex. The core complex associates with protein phosphatase 2A subunits, to form the Integrator-PP2A (INTAC) complex.

The protein resides in the nucleus. Its subcellular location is the cytoplasm. Functionally, component of the integrator complex, a multiprotein complex that terminates RNA polymerase II (Pol II) transcription in the promoter-proximal region of genes. The integrator complex provides a quality checkpoint during transcription elongation by driving premature transcription termination of transcripts that are unfavorably configured for transcriptional elongation: the complex terminates transcription by (1) catalyzing dephosphorylation of the C-terminal domain (CTD) of Pol II subunit polr2a, (2) degrading the exiting nascent RNA transcript via endonuclease activity and (3) promoting the release of Pol II from bound DNA. The integrator complex is also involved in terminating the synthesis of non-coding Pol II transcripts, such as enhancer RNAs (eRNAs), small nuclear RNAs (snRNAs), telomerase RNAs and long non-coding RNAs (lncRNAs). The polypeptide is Integrator complex subunit 4 homolog (ints4) (Dictyostelium discoideum (Social amoeba)).